Reading from the N-terminus, the 39-residue chain is Cytochrome b559 subunit beta (39 aa).

A helical membrane pass occupies residues 14 to 30 (WLAVHGLAIPTVSFLGS). A heme-binding site is contributed by His18.

The protein belongs to the PsbE/PsbF family. Heterodimer of an alpha subunit and a beta subunit. PSII is composed of 1 copy each of membrane proteins PsbA, PsbB, PsbC, PsbD, PsbE, PsbF, PsbH, PsbI, PsbJ, PsbK, PsbL, PsbM, PsbT, PsbX, PsbY, PsbZ, Psb30/Ycf12, at least 3 peripheral proteins of the oxygen-evolving complex and a large number of cofactors. It forms dimeric complexes. Heme b is required as a cofactor.

It localises to the plastid. The protein localises to the chloroplast thylakoid membrane. This b-type cytochrome is tightly associated with the reaction center of photosystem II (PSII). PSII is a light-driven water:plastoquinone oxidoreductase that uses light energy to abstract electrons from H(2)O, generating O(2) and a proton gradient subsequently used for ATP formation. It consists of a core antenna complex that captures photons, and an electron transfer chain that converts photonic excitation into a charge separation. In Beta vulgaris (Sugar beet), this protein is Cytochrome b559 subunit beta.